The chain runs to 541 residues: Protein panoramix (541 aa).

An interaction with Piwi region spans residues 1 to 169; the sequence is MEAPMKLEVK…TLVPDEQQSF (169 aa). Disordered stretches follow at residues 52–75 and 198–281; these read SDPEDGNLVHHSATPTSDEHLQPS and TAEN…TELD. A coiled-coil region spans residues 194–216; that stretch reads MLEMTAENRKVKHKKKKHKKERS. A compositionally biased stretch (basic residues) spans 203–220; the sequence is KVKHKKKKHKKERSHRSN. Composition is skewed to basic and acidic residues over residues 241–251 and 269–279; these read DDKNQFDCDYR and SSKERKLRDTE. A nxf2-interacting region (NIR) region spans residues 315–343; sequence LSKADKRSLAVARAELVLEQIQQKANKEE. Positions 323-343 form a coiled coil; sequence LAVARAELVLEQIQQKANKEE. Residues 387–446 form a necessary for interaction with nxf2 and protein stability region; that stretch reads TPGTRIDLSKWGLETVPEATKRLLRLLGIDVARLKELQSTVKPSQRILKLKKEQLEQGLA.

As to quaternary structure, in the ovaries, part of a complex composed of at least Panx, nxf2, piwi and Nxt1. The complex is knowns as Panx-induced cotranscriptional silencing (PICTS) complex, Panx-nxf2-dependent TAP/p15 silencing (Pandas complex), SFiNX (silencing factor interacting nuclear export variant) or piwi-Panx-nxf2-p15 (PPNP) complex. Interacts (via NIR region) with nxf2 (via TAP-C domain); the interaction is direct. As to expression, expressed in female gonads (at protein level).

Its subcellular location is the nucleus. Its function is as follows. Acts via the piwi-interacting RNA (piRNA) pathway which mediates the repression of transposable elements during meiosis by forming complexes composed of piRNAs and piwi proteins and governs the methylation and subsequent repression of transposons. Required for transcriptional silencing of transposons targeted by piwi and confers its effects by interacting with nascent RNA transcripts. Likely to be recruited to nascent transcripts cotranscriptionally by piwi and to recruit additional factors involved in transcriptional silencing. In the ovaries, forms a complex with nxf2, piwi and Nxt1 which acts as effectors of cotranscriptional transposon silencing. The interaction with nxf2 stabilizes the nuclear protein complex. The sequence is that of Protein panoramix from Drosophila melanogaster (Fruit fly).